The following is a 58-amino-acid chain: Metallothionein (58 aa).

Positions 1–29 are beta; the sequence is MPGPCCNDVCECAAGGCKTGCVCTSCRCS. C5, C6, C10, C12, C17, C21, C23, C26, C28, C31, C34, C38, C40, C46, C50, C54, C56, and C57 together coordinate a divalent metal cation. The interval 30 to 58 is alpha; the sequence is PCDKCTSGCKCPSKEECAKTCSKPCECCP.

Functionally, metallothioneins have a high content of cysteine residues that bind various heavy metals. Class I MTS in crustacea are involved in the sequestration of elevated levels of heavy-metal ions. The sequence is that of Metallothionein from Astacus astacus (Noble crayfish).